The sequence spans 372 residues: Cytochrome b (372 aa).

4 helical membrane-spanning segments follow: residues 25 to 45 (FGSM…FLAI), 69 to 90 (WIMQ…YIHI), 105 to 125 (WFSG…GYVL), and 170 to 190 (FFAL…IHII). Residues histidine 75 and histidine 89 each contribute to the heme b site. Histidine 174 and histidine 188 together coordinate heme b. Histidine 193 contacts a ubiquinone. 4 helical membrane passes run 218 to 238 (YKDM…LSFM), 280 to 300 (LGGT…PFTH), 312 to 332 (LAQT…WTAT), and 339 to 358 (FILI…IMNP).

It belongs to the cytochrome b family. As to quaternary structure, the cytochrome bc1 complex contains 3 respiratory subunits (MT-CYB, CYC1 and UQCRFS1), 2 core proteins (UQCRC1 and UQCRC2) and probably 6 low-molecular weight proteins. Heme b serves as cofactor.

It localises to the mitochondrion inner membrane. Component of the ubiquinol-cytochrome c reductase complex (complex III or cytochrome b-c1 complex) that is part of the mitochondrial respiratory chain. The b-c1 complex mediates electron transfer from ubiquinol to cytochrome c. Contributes to the generation of a proton gradient across the mitochondrial membrane that is then used for ATP synthesis. The chain is Cytochrome b (MT-CYB) from Sinomicrurus japonicus (Coral snake).